Here is a 462-residue protein sequence, read N- to C-terminus: Fez family zinc finger protein 1 (462 aa).

The Engrailed homology 1 repressor motif lies at 34 to 49; the sequence is PLAFSIERIMSRTPEP. 6 C2H2-type zinc fingers span residues 260 to 282, 288 to 310, 316 to 338, 344 to 366, 372 to 394, and 400 to 423; these read FTCE…MPVH, FVCK…KIIH, HKCN…TRIH, FVCE…KLTH, FKCN…MHTH, and FTCP…RKLH. Residues 441–462 are disordered; the sequence is LLLPNREPSPTIQSPQLQKSGY. Over residues 448-462 the composition is skewed to polar residues; that stretch reads PSPTIQSPQLQKSGY.

This sequence belongs to the krueppel C2H2-type zinc-finger protein family.

The protein localises to the nucleus. Transcription repressor. Involved in the development of the forebrain region. In Xenopus tropicalis (Western clawed frog), this protein is Fez family zinc finger protein 1 (fezf1).